We begin with the raw amino-acid sequence, 230 residues long: Cutinase (230 aa).

The N-terminal stretch at 1–16 (MKFFALTTFLAATASA) is a signal peptide. Cysteines 47 and 125 form a disulfide. The Nucleophile role is filled by S136. The cysteines at positions 187 and 194 are disulfide-linked. D191 is a catalytic residue. H204 functions as the Proton donor/acceptor in the catalytic mechanism.

Belongs to the cutinase family. Post-translationally, the 2 disulfide bonds play a critical role in holding the catalytic residues in juxta-position; reduction of the disulfide bridges results in the complete inactivation of the enzyme.

It is found in the secreted. It carries out the reaction cutin + H2O = cutin monomers.. In terms of biological role, catalyzes the hydrolysis of complex carboxylic polyesters found in the cell wall of plants. Degrades cutin, a macromolecule that forms the structure of the plant cuticle. Allows pathogenic fungi to penetrate through the cuticular barrier into the host plant during the initial stage of fungal infection. The chain is Cutinase (CUTA) from Fusarium solani subsp. cucurbitae (Neocosmosporum cucurbitae).